The primary structure comprises 162 residues: uncharacterized protein (162 aa).

To R.meliloti R02472.

This is an uncharacterized protein from Escherichia coli (strain K12).